We begin with the raw amino-acid sequence, 315 residues long: tRNA-specific adenosine deaminase subunit tad3 (315 aa).

A CMP/dCMP-type deaminase domain is found at 158–299 (KRIESILEDL…AELNHRYLAY (142 aa)). Residues H211, C253, and C256 each coordinate Zn(2+).

This sequence belongs to the cytidine and deoxycytidylate deaminase family. ADAT3 subfamily. As to quaternary structure, heterodimer with Tad2.

The protein localises to the cytoplasm. Its subcellular location is the nucleus. Its function is as follows. Structural subunit of tRNA-specific adenosine deaminase, which deaminates adenosine-34 (the first, also called wobble position of the anticodon) to inosine in many tRNAs. Inosine-34 allows the decoding of 3 different nucleotides at the third position of mRNA codons, as inosine is able to pair with U, C, and A. The wobble inosine tRNA modification is essential for cell cycle progression in the G1/S and G2/M transitions in fission yeast. The chain is tRNA-specific adenosine deaminase subunit tad3 (tad3) from Schizosaccharomyces pombe (strain 972 / ATCC 24843) (Fission yeast).